The sequence spans 64 residues: Large ribosomal subunit protein bL28 (64 aa).

Belongs to the bacterial ribosomal protein bL28 family.

This is Large ribosomal subunit protein bL28 from Desulfotalea psychrophila (strain LSv54 / DSM 12343).